The primary structure comprises 665 residues: UvrABC system protein B (665 aa).

A Helicase ATP-binding domain is found at 25–412 (ASIEGGNRYQ…ENRIVEQVIR (388 aa)). 38–45 (GATGTGKT) is a binding site for ATP. The Beta-hairpin motif lies at 91–114 (YYDYYQPEAYIPVTDTYIEKTAAI). The region spanning 429 to 583 (QIDDLLGEIK…VAYNKLHGIT (155 aa)) is the Helicase C-terminal domain. The UVR domain occupies 626-661 (PNLIDKLEAQMKEASKKLEFEEAAKLRDRIKQLRDK).

This sequence belongs to the UvrB family. In terms of assembly, forms a heterotetramer with UvrA during the search for lesions. Interacts with UvrC in an incision complex.

Its subcellular location is the cytoplasm. Its function is as follows. The UvrABC repair system catalyzes the recognition and processing of DNA lesions. A damage recognition complex composed of 2 UvrA and 2 UvrB subunits scans DNA for abnormalities. Upon binding of the UvrA(2)B(2) complex to a putative damaged site, the DNA wraps around one UvrB monomer. DNA wrap is dependent on ATP binding by UvrB and probably causes local melting of the DNA helix, facilitating insertion of UvrB beta-hairpin between the DNA strands. Then UvrB probes one DNA strand for the presence of a lesion. If a lesion is found the UvrA subunits dissociate and the UvrB-DNA preincision complex is formed. This complex is subsequently bound by UvrC and the second UvrB is released. If no lesion is found, the DNA wraps around the other UvrB subunit that will check the other stand for damage. The polypeptide is UvrABC system protein B (Nostoc sp. (strain PCC 7120 / SAG 25.82 / UTEX 2576)).